Reading from the N-terminus, the 250-residue chain is Cell division protein ZapD (250 aa).

Belongs to the ZapD family. In terms of assembly, interacts with FtsZ.

The protein localises to the cytoplasm. In terms of biological role, cell division factor that enhances FtsZ-ring assembly. Directly interacts with FtsZ and promotes bundling of FtsZ protofilaments, with a reduction in FtsZ GTPase activity. This is Cell division protein ZapD from Pectobacterium atrosepticum (strain SCRI 1043 / ATCC BAA-672) (Erwinia carotovora subsp. atroseptica).